A 205-amino-acid polypeptide reads, in one-letter code: Small ribosomal subunit protein uS4 (205 aa).

The S4 RNA-binding domain occupies 94 to 157; sequence SRLDTVVYRM…QQIPLIQESI (64 aa).

This sequence belongs to the universal ribosomal protein uS4 family. In terms of assembly, part of the 30S ribosomal subunit. Contacts protein S5. The interaction surface between S4 and S5 is involved in control of translational fidelity.

Functionally, one of the primary rRNA binding proteins, it binds directly to 16S rRNA where it nucleates assembly of the body of the 30S subunit. Its function is as follows. With S5 and S12 plays an important role in translational accuracy. The sequence is that of Small ribosomal subunit protein uS4 from Rickettsia prowazekii (strain Madrid E).